The primary structure comprises 201 residues: Lymphocyte antigen 6 complex locus protein G5b (201 aa).

A signal peptide spans 1-18 (MKVHMLVGVLVMVGFTVG). Positions 26–118 (RTCHFCLVED…SPQLQSSLPE (93 aa)) constitute a UPAR/Ly6 domain. Cystine bridges form between cysteine 28/cysteine 55, cysteine 31/cysteine 40, cysteine 47/cysteine 73, cysteine 81/cysteine 98, and cysteine 99/cysteine 104. 2 N-linked (GlcNAc...) asparagine glycosylation sites follow: asparagine 141 and asparagine 183.

Forms oligomer. N-glycosylated.

It localises to the secreted. This chain is Lymphocyte antigen 6 complex locus protein G5b (LY6G5B), found in Homo sapiens (Human).